The following is a 570-amino-acid chain: Urease subunit alpha (570 aa).

The Urease domain occupies 131 to 570 (GGMDSHIHFI…LPMAQRYFLF (440 aa)). 3 residues coordinate Ni(2+): H136, H138, and K219. Position 219 is an N6-carboxylysine (K219). H221 contacts substrate. Residues H248 and H274 each coordinate Ni(2+). H322 acts as the Proton donor in catalysis. Residue D362 coordinates Ni(2+).

Belongs to the metallo-dependent hydrolases superfamily. Urease alpha subunit family. Heterotrimer of UreA (gamma), UreB (beta) and UreC (alpha) subunits. Three heterotrimers associate to form the active enzyme. Ni cation is required as a cofactor. Carboxylation allows a single lysine to coordinate two nickel ions.

Its subcellular location is the cytoplasm. The enzyme catalyses urea + 2 H2O + H(+) = hydrogencarbonate + 2 NH4(+). It functions in the pathway nitrogen metabolism; urea degradation; CO(2) and NH(3) from urea (urease route): step 1/1. The sequence is that of Urease subunit alpha from Rhizobium meliloti (strain 1021) (Ensifer meliloti).